The primary structure comprises 154 residues: Probable chemoreceptor glutamine deamidase CheD (154 aa).

The protein belongs to the CheD family.

It carries out the reaction L-glutaminyl-[protein] + H2O = L-glutamyl-[protein] + NH4(+). In terms of biological role, probably deamidates glutamine residues to glutamate on methyl-accepting chemotaxis receptors (MCPs), playing an important role in chemotaxis. This Methanococcus vannielii (strain ATCC 35089 / DSM 1224 / JCM 13029 / OCM 148 / SB) protein is Probable chemoreceptor glutamine deamidase CheD.